Reading from the N-terminus, the 497-residue chain is Tyrosine-protein kinase SPK-1 (497 aa).

The tract at residues M1 to P25 is disordered. The SH3 domain occupies P33 to G94. An SH2 domain is found at E100–M200. In terms of domain architecture, Protein kinase spans I220–L482. Residues I226 to V234 and K248 each bind ATP. Residue D342 is the Proton acceptor of the active site.

This sequence belongs to the protein kinase superfamily. Tyr protein kinase family.

The enzyme catalyses L-tyrosyl-[protein] + ATP = O-phospho-L-tyrosyl-[protein] + ADP + H(+). This chain is Tyrosine-protein kinase SPK-1, found in Girardia tigrina (Planarian).